The following is a 715-amino-acid chain: Palmitoyltransferase ZDHHC5 (715 aa).

At 1 to 13 (MPAESGKRFKPSK) the chain is on the cytoplasmic side. A helical transmembrane segment spans residues 14-34 (YVPVSAAAIFLVGATTLFFAF). Residues 35–52 (TCPGLSLNVSPAVPIYNA) lie on the Extracellular side of the membrane. The chain crosses the membrane as a helical span at residues 53 to 73 (IMFLFVLANFSMATFMDPGIF). Topologically, residues 74–148 (PRAEEDEDKE…NCIGRRNYRY (75 aa)) are cytoplasmic. The residue at position 91 (Tyr91) is a Phosphotyrosine. The DHHC domain maps to 104 to 154 (KWCATCRFYRPPRCSHCSVCDNCVEEFDHHCPWVNNCIGRRNYRYFFLFLL). Catalysis depends on Cys134, which acts as the S-palmitoyl cysteine intermediate. A helical transmembrane segment spans residues 149-169 (FFLFLLSLTAHIMGVFGFGLL). At 170 to 191 (YVLYHIEELSGVRTAVTMAVMC) the chain is on the extracellular side. A helical membrane pass occupies residues 192 to 212 (VAGLFFIPVAGLTGFHVVLVA). The Cytoplasmic segment spans residues 213–715 (RGRTTNEQVT…VGGTTYEISV (503 aa)). Phosphoserine is present on Ser247. A disordered region spans residues 289–715 (GELRRTKSKG…VGGTTYEISV (427 aa)). Residue Thr294 is modified to Phosphothreonine. Residues Ser296 and Ser299 each carry the phosphoserine modification. Residue Thr303 is modified to Phosphothreonine. Residue Ser345 is modified to Phosphoserine. A phosphothreonine mark is found at Thr348 and Thr350. Over residues 359-373 (SSSSTSAAMPHSSSA) the composition is skewed to low complexity. Phosphoserine occurs at positions 380, 398, 406, and 409. Thr411 is subject to Phosphothreonine. Phosphoserine occurs at positions 415, 425, 429, and 432. Residues 422-432 (SSGSRSSSLKS) show a composition bias toward low complexity. Thr436 bears the Phosphothreonine mark. Over residues 442 to 478 (QLQSIRSEGTTSTSYKSLANQTRNGSLSYDSLLTPSD) the composition is skewed to polar residues. Phosphoserine occurs at positions 529 and 554. Positions 581–597 (PRTSSSSDDSKRSPLSK) are enriched in low complexity. An Omega-N-methylarginine modification is found at Arg617. Ser621 carries the phosphoserine modification. Thr659 is subject to Phosphothreonine. Over residues 666 to 677 (LKTTYSKSNGQP) the composition is skewed to polar residues. Phosphoserine occurs at positions 684 and 694. Residue Arg697 is modified to Omega-N-methylarginine.

It belongs to the DHHC palmitoyltransferase family. ERF2/ZDHHC9 subfamily. Post-translationally, phosphorylation regulates association with endocytic proteins and its subcellular localization. Phosphorylation by LYN during fatty acid uptake leads to inactivation of the activity. Autopalmitoylated. Palmitoylation of the C-terminal tail regulates stimulation-dependent plasma membrane motility. In terms of tissue distribution, highly enriched in brain, detectable in liver and heart, and undetectable in most other tissues.

The protein localises to the cell membrane. The enzyme catalyses L-cysteinyl-[protein] + hexadecanoyl-CoA = S-hexadecanoyl-L-cysteinyl-[protein] + CoA. Its function is as follows. Palmitoyltransferase that catalyzes the addition of palmitate onto various protein substrates such as CTNND2, CD36, GSDMD, NLRP3, NOD1, NOD2, STAT3 and S1PR1 thus plays a role in various biological processes including cell adhesion, inflammation, fatty acid uptake, bacterial sensing or cardiac functions. Plays an important role in the regulation of synapse efficacy by mediating palmitoylation of delta-catenin/CTNND2, thereby increasing synaptic delivery and surface stabilization of alpha-amino-3-hydroxy-5-methyl-4-isoxazole propionic acid receptors (AMPARs). Under basal conditions, remains at the synaptic membrane through FYN-mediated phosphorylation that prevents association with endocytic proteins. Neuronal activity enhances the internalization and trafficking of DHHC5 from spines to dendritic shafts where it palmitoylates delta-catenin/CTNND2. Regulates cell adhesion at the plasma membrane by palmitoylating GOLGA7B and DSG2. Plays a role in innate immune response by mediating the palmitoylation of NOD1 and NOD2 and their proper recruitment to the bacterial entry site and phagosomes. Also participates in fatty acid uptake by palmitoylating CD36 and thereby targeting it to the plasma membrane. Upon binding of fatty acids to CD36, gets phosphorylated by LYN leading to inactivation and subsequent CD36 caveolar endocytosis. Controls oligodendrocyte development by catalyzing STAT3 palmitoylation. Acts as a regulator of inflammatory response by mediating palmitoylation of NLRP3 and GSDMD. Palmitoylates NLRP3 to promote inflammasome assembly and activation. Activates pyroptosis by catalyzing palmitoylation of gasdermin-D (GSDMD), thereby promoting membrane translocation and pore formation of GSDMD. This Mus musculus (Mouse) protein is Palmitoyltransferase ZDHHC5 (Zdhhc5).